Reading from the N-terminus, the 640-residue chain is LRR receptor kinase SERL2 (640 aa).

Residues 1-22 (MEPPFFLLLLLLVVSSSSPSAA) form the signal peptide. At 23–241 (LLSAKGVNNE…AARDRGHKFA (219 aa)) the chain is on the extracellular side. Asn-94 and Asn-107 each carry an N-linked (GlcNAc...) asparagine glycan. 4 LRR repeats span residues 95 to 119 (LTNL…IGRL), 120 to 143 (ENLK…VGHL), 145 to 167 (SLQY…SANL), and 168 to 191 (SHLV…LART). 4 N-linked (GlcNAc...) asparagine glycosylation sites follow: Asn-153, Asn-166, Asn-179, and Asn-222. The helical transmembrane segment at 242 to 262 (VAFGSTAGCMGLLLLAAGFLF) threads the bilayer. The Cytoplasmic portion of the chain corresponds to 263-640 (WWRHRRNRQI…VQAVELSGPR (378 aa)). The region spanning 304–583 (FSGKNILGKG…EGDGLADRWE (280 aa)) is the Protein kinase domain. ATP is bound by residues 310 to 318 (LGKGGFGNV) and Lys-332. Catalysis depends on Asp-427, which acts as the Proton acceptor.

It belongs to the protein kinase superfamily. Ser/Thr protein kinase family. As to quaternary structure, interacts with MSBP1.

Its subcellular location is the cell membrane. It carries out the reaction L-seryl-[protein] + ATP = O-phospho-L-seryl-[protein] + ADP + H(+). The enzyme catalyses L-threonyl-[protein] + ATP = O-phospho-L-threonyl-[protein] + ADP + H(+). Functionally, LRR receptor kinase that may be involved in defense response. This Oryza sativa subsp. japonica (Rice) protein is LRR receptor kinase SERL2.